Here is a 539-residue protein sequence, read N- to C-terminus: Bifunctional purine biosynthesis protein PurH (539 aa).

An MGS-like domain is found at 8–159 (FPIPDLHRVR…KNYAYTGVVT (152 aa)).

It belongs to the PurH family.

It catalyses the reaction (6R)-10-formyltetrahydrofolate + 5-amino-1-(5-phospho-beta-D-ribosyl)imidazole-4-carboxamide = 5-formamido-1-(5-phospho-D-ribosyl)imidazole-4-carboxamide + (6S)-5,6,7,8-tetrahydrofolate. The catalysed reaction is IMP + H2O = 5-formamido-1-(5-phospho-D-ribosyl)imidazole-4-carboxamide. The protein operates within purine metabolism; IMP biosynthesis via de novo pathway; 5-formamido-1-(5-phospho-D-ribosyl)imidazole-4-carboxamide from 5-amino-1-(5-phospho-D-ribosyl)imidazole-4-carboxamide (10-formyl THF route): step 1/1. It functions in the pathway purine metabolism; IMP biosynthesis via de novo pathway; IMP from 5-formamido-1-(5-phospho-D-ribosyl)imidazole-4-carboxamide: step 1/1. This is Bifunctional purine biosynthesis protein PurH from Bartonella tribocorum (strain CIP 105476 / IBS 506).